A 434-amino-acid polypeptide reads, in one-letter code: Glutamate-1-semialdehyde 2,1-aminomutase (434 aa).

The residue at position 271 (Lys271) is an N6-(pyridoxal phosphate)lysine.

The protein belongs to the class-III pyridoxal-phosphate-dependent aminotransferase family. HemL subfamily. Homodimer. Pyridoxal 5'-phosphate serves as cofactor.

Its subcellular location is the cytoplasm. The enzyme catalyses (S)-4-amino-5-oxopentanoate = 5-aminolevulinate. It participates in porphyrin-containing compound metabolism; protoporphyrin-IX biosynthesis; 5-aminolevulinate from L-glutamyl-tRNA(Glu): step 2/2. The protein operates within porphyrin-containing compound metabolism; chlorophyll biosynthesis. In Prochlorococcus marinus (strain MIT 9312), this protein is Glutamate-1-semialdehyde 2,1-aminomutase.